The primary structure comprises 652 residues: Carboxypeptidase S1 homolog A (652 aa).

Residues 1–19 (MRFAASIAVALPVIHAASA) form the signal peptide. A disulfide bridge links cysteine 50 with cysteine 121. N-linked (GlcNAc...) asparagine glycosylation is found at asparagine 77, asparagine 132, asparagine 161, asparagine 168, asparagine 184, and asparagine 202. Residue serine 238 is part of the active site. Residues asparagine 260, asparagine 299, asparagine 347, and asparagine 410 are each glycosylated (N-linked (GlcNAc...) asparagine). 2 cysteine pairs are disulfide-bonded: cysteine 325–cysteine 361 and cysteine 332–cysteine 354. Aspartate 458 is a catalytic residue. Residue cysteine 461 coordinates substrate. Asparagine 474, asparagine 492, and asparagine 505 each carry an N-linked (GlcNAc...) asparagine glycan. Histidine 516 is an active-site residue. Glutamate 517 contributes to the substrate binding site. The disordered stretch occupies residues 608–627 (AASKGNPPPTTTSSPTAAPT). Residues 618–627 (TTSSPTAAPT) show a composition bias toward low complexity. Glycine 629 is lipidated: GPI-anchor amidated glycine. A propeptide spans 630 to 652 (SAMLKAPVAMLAISALTVLAFFL) (removed in mature form).

It belongs to the peptidase S10 family.

The protein localises to the cell membrane. The enzyme catalyses Preferential release of a C-terminal arginine or lysine residue.. Functionally, extracellular serine carboxypeptidase that contributes to pathogenicity. The sequence is that of Carboxypeptidase S1 homolog A (SCPA) from Trichophyton rubrum (Athlete's foot fungus).